Consider the following 89-residue polypeptide: Large ribosomal subunit protein bL27 (89 aa).

Positions Met-1–Arg-20 are disordered.

It belongs to the bacterial ribosomal protein bL27 family.

The polypeptide is Large ribosomal subunit protein bL27 (Bartonella bacilliformis (strain ATCC 35685 / KC583 / Herrer 020/F12,63)).